Here is a 245-residue protein sequence, read N- to C-terminus: tRNA pseudouridine synthase A (245 aa).

Aspartate 52 acts as the Nucleophile in catalysis. Tyrosine 111 contributes to the substrate binding site.

Belongs to the tRNA pseudouridine synthase TruA family. In terms of assembly, homodimer.

It carries out the reaction uridine(38/39/40) in tRNA = pseudouridine(38/39/40) in tRNA. Functionally, formation of pseudouridine at positions 38, 39 and 40 in the anticodon stem and loop of transfer RNAs. The sequence is that of tRNA pseudouridine synthase A from Rickettsia akari (strain Hartford).